The primary structure comprises 337 residues: uncharacterized protein (337 aa).

Topologically, residues 1–10 are cytoplasmic; the sequence is MKLKINIRPN. The chain crosses the membrane as a helical span at residues 11–31; that stretch reads EIIFLICIVVIFSFSYTLTYF. Topologically, residues 32–100 are extracellular; sequence DSPIFKEHYI…LEKLFSFSDN (69 aa). A helical membrane pass occupies residues 101-121; sequence ILIVLIIVQVIVGFLIFLLSV. Residues 122-197 lie on the Cytoplasmic side of the membrane; it reads EKLSKCNYQL…KILIIKKKRD (76 aa). Positions 148–167 are enriched in low complexity; that stretch reads NNNNEDINNNNNNNNNNNNK. A disordered region spans residues 148 to 179; the sequence is NNNNEDINNNNNNNNNNNNKNKNDERNNEEIE. A helical transmembrane segment spans residues 198 to 218; the sequence is ILLAIIIFFLVLLGVLTIIYV. The Extracellular segment spans residues 219–285; the sequence is SFIPLNIRKA…SWSLDSGLFN (67 aa). Residues 286 to 306 form a helical membrane-spanning segment; the sequence is VKIVFFSTILIEFLTGCLILL. The Cytoplasmic portion of the chain corresponds to 307–337; it reads MKFKKDPNIVPLTKPSIASPTQIPHLFCIAK.

The protein resides in the membrane. This is an uncharacterized protein from Dictyostelium discoideum (Social amoeba).